The primary structure comprises 876 residues: DNA topoisomerase 1 (876 aa).

Positions 3–150 (KSLVIVESPA…RYKRVVFNEI (148 aa)) constitute a Toprim domain. Glutamate 9 serves as a coordination point for Mg(2+). The disordered stretch occupies residues 37–69 (LPTAGQTATPTGKAAAASTKKASTTDKEQQKRE). Low complexity predominate over residues 38–58 (PTAGQTATPTGKAAAASTKKA). Positions 59–69 (STTDKEQQKRE) are enriched in basic and acidic residues. A Mg(2+)-binding site is contributed by aspartate 119. Residues 166 to 582 (NMDGVNAQQA…EFFADFSRDL (417 aa)) enclose the Topo IA-type catalytic domain. Positions 200–205 (SAGRVQ) are interaction with DNA. The O-(5'-phospho-DNA)-tyrosine intermediate role is filled by tyrosine 327. C4-type zinc fingers lie at residues 668–695 (CPIC…NPNC) and 717–742 (CDKC…NDAC).

The protein belongs to the type IA topoisomerase family. As to quaternary structure, monomer. It depends on Mg(2+) as a cofactor.

The catalysed reaction is ATP-independent breakage of single-stranded DNA, followed by passage and rejoining.. Functionally, releases the supercoiling and torsional tension of DNA, which is introduced during the DNA replication and transcription, by transiently cleaving and rejoining one strand of the DNA duplex. Introduces a single-strand break via transesterification at a target site in duplex DNA. The scissile phosphodiester is attacked by the catalytic tyrosine of the enzyme, resulting in the formation of a DNA-(5'-phosphotyrosyl)-enzyme intermediate and the expulsion of a 3'-OH DNA strand. The free DNA strand then undergoes passage around the unbroken strand, thus removing DNA supercoils. Finally, in the religation step, the DNA 3'-OH attacks the covalent intermediate to expel the active-site tyrosine and restore the DNA phosphodiester backbone. The protein is DNA topoisomerase 1 of Vibrio cholerae serotype O1 (strain ATCC 39315 / El Tor Inaba N16961).